We begin with the raw amino-acid sequence, 398 residues long: CCA-adding enzyme (398 aa).

The ATP site is built by Gly-32 and Arg-35. Positions 32 and 35 each coordinate CTP. Mg(2+) contacts are provided by Asp-45 and Asp-47. Residues Arg-116, Asp-159, Arg-162, Arg-165, and Arg-168 each contribute to the ATP site. Residues Arg-116, Asp-159, Arg-162, Arg-165, and Arg-168 each coordinate CTP.

Belongs to the tRNA nucleotidyltransferase/poly(A) polymerase family. Bacterial CCA-adding enzyme type 3 subfamily. In terms of assembly, homodimer. It depends on Mg(2+) as a cofactor.

The enzyme catalyses a tRNA precursor + 2 CTP + ATP = a tRNA with a 3' CCA end + 3 diphosphate. It carries out the reaction a tRNA with a 3' CCA end + 2 CTP + ATP = a tRNA with a 3' CCACCA end + 3 diphosphate. Its function is as follows. Catalyzes the addition and repair of the essential 3'-terminal CCA sequence in tRNAs without using a nucleic acid template. Adds these three nucleotides in the order of C, C, and A to the tRNA nucleotide-73, using CTP and ATP as substrates and producing inorganic pyrophosphate. tRNA 3'-terminal CCA addition is required both for tRNA processing and repair. Also involved in tRNA surveillance by mediating tandem CCA addition to generate a CCACCA at the 3' terminus of unstable tRNAs. While stable tRNAs receive only 3'-terminal CCA, unstable tRNAs are marked with CCACCA and rapidly degraded. The sequence is that of CCA-adding enzyme from Lacticaseibacillus paracasei (strain ATCC 334 / BCRC 17002 / CCUG 31169 / CIP 107868 / KCTC 3260 / NRRL B-441) (Lactobacillus paracasei).